The chain runs to 313 residues: Cadmium, cobalt and zinc/H(+)-K(+) antiporter (313 aa).

Over 1-14 (MGHNHNHAGGSNKK) the chain is Extracellular. Residues 15-35 (VLLISFIMITGYMIIEAIGGF) form a helical membrane-spanning segment. Topologically, residues 36–45 (LTNSLALLSD) are cytoplasmic. A helical transmembrane segment spans residues 46-66 (AGHMLSDSISLMVALIAFKLA). Residues 67 to 80 (EKKASHHKTFGYKR) are Extracellular-facing. Residues 81 to 101 (FEILAAVINGVALILISLYII) traverse the membrane as a helical segment. The Cytoplasmic portion of the chain corresponds to 102–117 (YEAIKRFSHPPEVATT). A helical membrane pass occupies residues 118–138 (GMLTISIIGLAVNILVAWIML). The Extracellular portion of the chain corresponds to 139 to 159 (NGGDTKNNLNIRGAYLHVISD). The helical transmembrane segment at 160–180 (MLGSIGAILAAILIIFFGWSW) threads the bilayer. Topologically, residues 181-313 (ADPAASVIVA…TENPRDHHHH (133 aa)) are cytoplasmic.

The protein belongs to the cation diffusion facilitator (CDF) transporter (TC 2.A.4) family. SLC30A subfamily.

The protein localises to the cell membrane. In terms of biological role, involved in divalent cation and potassium homeostasis in the cell. Catalyzes the active efflux of zinc, cadmium and cobalt, in exchange for potassium and H(+) ions. In Bacillus velezensis (strain DSM 23117 / BGSC 10A6 / LMG 26770 / FZB42) (Bacillus amyloliquefaciens subsp. plantarum), this protein is Cadmium, cobalt and zinc/H(+)-K(+) antiporter (czcD).